The primary structure comprises 100 residues: Large ribosomal subunit protein uL23 (100 aa).

It belongs to the universal ribosomal protein uL23 family. Part of the 50S ribosomal subunit. Contacts protein L29, and trigger factor when it is bound to the ribosome.

In terms of biological role, one of the early assembly proteins it binds 23S rRNA. One of the proteins that surrounds the polypeptide exit tunnel on the outside of the ribosome. Forms the main docking site for trigger factor binding to the ribosome. The chain is Large ribosomal subunit protein uL23 from Lacticaseibacillus casei (strain BL23) (Lactobacillus casei).